The sequence spans 403 residues: Tyrosine--tRNA ligase (403 aa).

The 'HIGH' region signature appears at 42-51 (PTAPDLHLGH). Residues 226–230 (KMSKS) carry the 'KMSKS' region motif. Residue Lys229 coordinates ATP. Positions 336–396 (MPISAVLNKA…GKKAFGRITL (61 aa)) constitute an S4 RNA-binding domain.

It belongs to the class-I aminoacyl-tRNA synthetase family. TyrS type 2 subfamily. Homodimer.

The protein resides in the cytoplasm. It carries out the reaction tRNA(Tyr) + L-tyrosine + ATP = L-tyrosyl-tRNA(Tyr) + AMP + diphosphate + H(+). Its function is as follows. Catalyzes the attachment of tyrosine to tRNA(Tyr) in a two-step reaction: tyrosine is first activated by ATP to form Tyr-AMP and then transferred to the acceptor end of tRNA(Tyr). This chain is Tyrosine--tRNA ligase, found in Pseudomonas syringae pv. tomato (strain ATCC BAA-871 / DC3000).